A 467-amino-acid chain; its full sequence is ATP synthase subunit beta (467 aa).

Residue 154 to 161 (GGAGVGKT) participates in ATP binding.

This sequence belongs to the ATPase alpha/beta chains family. As to quaternary structure, F-type ATPases have 2 components, CF(1) - the catalytic core - and CF(0) - the membrane proton channel. CF(1) has five subunits: alpha(3), beta(3), gamma(1), delta(1), epsilon(1). CF(0) has three main subunits: a(1), b(2) and c(9-12). The alpha and beta chains form an alternating ring which encloses part of the gamma chain. CF(1) is attached to CF(0) by a central stalk formed by the gamma and epsilon chains, while a peripheral stalk is formed by the delta and b chains.

It localises to the cell inner membrane. The catalysed reaction is ATP + H2O + 4 H(+)(in) = ADP + phosphate + 5 H(+)(out). Functionally, produces ATP from ADP in the presence of a proton gradient across the membrane. The catalytic sites are hosted primarily by the beta subunits. In Leptospira interrogans serogroup Icterohaemorrhagiae serovar copenhageni (strain Fiocruz L1-130), this protein is ATP synthase subunit beta.